Here is a 1370-residue protein sequence, read N- to C-terminus: DNA-directed RNA polymerase subunit beta (1370 aa).

Belongs to the RNA polymerase beta chain family. In terms of assembly, the RNAP catalytic core consists of 2 alpha, 1 beta, 1 beta' and 1 omega subunit. When a sigma factor is associated with the core the holoenzyme is formed, which can initiate transcription.

The enzyme catalyses RNA(n) + a ribonucleoside 5'-triphosphate = RNA(n+1) + diphosphate. Functionally, DNA-dependent RNA polymerase catalyzes the transcription of DNA into RNA using the four ribonucleoside triphosphates as substrates. The sequence is that of DNA-directed RNA polymerase subunit beta from Polaromonas naphthalenivorans (strain CJ2).